A 247-amino-acid polypeptide reads, in one-letter code: ATP synthase subunit a, chloroplastic (247 aa).

Helical transmembrane passes span 38-58, 95-115, 134-154, 199-219, and 220-240; these read QVLI…TIAV, VPFI…GALL, INTT…AGLT, LVVV…VMLL, and GLFT…AYIG.

It belongs to the ATPase A chain family. In terms of assembly, F-type ATPases have 2 components, CF(1) - the catalytic core - and CF(0) - the membrane proton channel. CF(1) has five subunits: alpha(3), beta(3), gamma(1), delta(1), epsilon(1). CF(0) has four main subunits: a, b, b' and c.

It localises to the plastid. The protein resides in the chloroplast thylakoid membrane. Functionally, key component of the proton channel; it plays a direct role in the translocation of protons across the membrane. The polypeptide is ATP synthase subunit a, chloroplastic (Solanum lycopersicum (Tomato)).